Here is a 126-residue protein sequence, read N- to C-terminus: Holo-[acyl-carrier-protein] synthase (126 aa).

Positions 8 and 59 each coordinate Mg(2+).

The protein belongs to the P-Pant transferase superfamily. AcpS family. The cofactor is Mg(2+).

The protein localises to the cytoplasm. The enzyme catalyses apo-[ACP] + CoA = holo-[ACP] + adenosine 3',5'-bisphosphate + H(+). Functionally, transfers the 4'-phosphopantetheine moiety from coenzyme A to a Ser of acyl-carrier-protein. In Rickettsia akari (strain Hartford), this protein is Holo-[acyl-carrier-protein] synthase.